The sequence spans 452 residues: Ribosomal protein uS12 methylthiotransferase RimO (452 aa).

In terms of domain architecture, MTTase N-terminal spans 5–116; the sequence is PTIAFSHLGC…IVDVLQRTES (112 aa). The [4Fe-4S] cluster site is built by C14, C50, C79, C154, C158, and C161. Residues 140 to 369 enclose the Radical SAM core domain; that stretch reads TTTSAVAYLR…MATQQPIAER (230 aa). Residues 372–438 enclose the TRAM domain; that stretch reads RAQIGRLVDV…IYDLHGEVAS (67 aa).

It belongs to the methylthiotransferase family. RimO subfamily. The cofactor is [4Fe-4S] cluster.

The protein resides in the cytoplasm. The catalysed reaction is L-aspartate(89)-[ribosomal protein uS12]-hydrogen + (sulfur carrier)-SH + AH2 + 2 S-adenosyl-L-methionine = 3-methylsulfanyl-L-aspartate(89)-[ribosomal protein uS12]-hydrogen + (sulfur carrier)-H + 5'-deoxyadenosine + L-methionine + A + S-adenosyl-L-homocysteine + 2 H(+). Catalyzes the methylthiolation of an aspartic acid residue of ribosomal protein uS12. The sequence is that of Ribosomal protein uS12 methylthiotransferase RimO from Synechococcus elongatus (strain ATCC 33912 / PCC 7942 / FACHB-805) (Anacystis nidulans R2).